The chain runs to 507 residues: Beta-Ala-His dipeptidase (507 aa).

An N-terminal signal peptide occupies residues 1–26 (MDPKLGRMAASLLAVLLLLLERGMFS). Zn(2+) is bound at residue His132. The active site involves Asp134. Asp165 serves as a coordination point for Zn(2+). The active-site Proton acceptor is the Glu199. Zn(2+) is bound at residue Glu200. Ser219 carries the post-translational modification Phosphoserine. Zn(2+) is bound at residue Asp228. N-linked (GlcNAc...) asparagine glycans are attached at residues Asn322 and Asn382. His478 serves as a coordination point for Zn(2+).

Belongs to the peptidase M20A family. In terms of assembly, homodimer. Zn(2+) is required as a cofactor. Found in serum and adult nervous central system. Absent in serum from patients with homocarnosinosis.

It localises to the secreted. The enzyme catalyses Preferential hydrolysis of the beta-Ala-|-His dipeptide (carnosine), and also anserine, Xaa-|-His dipeptides and other dipeptides including homocarnosine.. It carries out the reaction carnosine + H2O = beta-alanine + L-histidine. The catalysed reaction is anserine + H2O = N(pros)-methyl-L-histidine + beta-alanine. It catalyses the reaction L-alanyl-L-histidine + H2O = L-histidine + L-alanine. The enzyme catalyses glycyl-L-histidine + H2O = L-histidine + glycine. It carries out the reaction L-homocarnosine + H2O = 4-aminobutanoate + L-histidine. Its activity is regulated as follows. Activated by cadmium ions. Inhibited by the metal chelator 1,10-o-phenantrolin. The inhibitory concentration 50% (IC(50)) is 5 uM. Functionally, catalyzes the peptide bond hydrolysis in Xaa-His dipeptides, displaying the highest activity toward carnosine (beta-alanyl-L-histidine) and anserine (beta-alanyl-3-methyl-histidine). This Homo sapiens (Human) protein is Beta-Ala-His dipeptidase.